The following is a 227-amino-acid chain: Threonine--tRNA ligase (227 aa).

Residues 1–120 form a catalytic region; the sequence is DIELKLSTRP…LIEHYEGAFP (120 aa).

The protein belongs to the class-II aminoacyl-tRNA synthetase family. In terms of assembly, homodimer.

The protein localises to the cytoplasm. It catalyses the reaction tRNA(Thr) + L-threonine + ATP = L-threonyl-tRNA(Thr) + AMP + diphosphate + H(+). Functionally, catalyzes the attachment of threonine to tRNA(Thr) in a two-step reaction: L-threonine is first activated by ATP to form Thr-AMP and then transferred to the acceptor end of tRNA(Thr). Also edits incorrectly charged L-seryl-tRNA(Thr). In Pseudomonas syringae pv. syringae, this protein is Threonine--tRNA ligase.